Reading from the N-terminus, the 1778-residue chain is Nuclear receptor corepressor 1 (1778 aa).

Residues 125–176 (DRLEEWSPEERSLFKSRQADHVKIFHGLTEFFVDKTASDLVLFYYMNKKTED) form the SANT domain. In terms of domain architecture, Myb-like spans 356–398 (WTDDEKTKLVTLINSSPTLDWVSISEGMNRRPNECKMQYDAMN). Acidic residues predominate over residues 409 to 421 (VDEEDGNGQEEGG). 6 disordered regions span residues 409-671 (VDEE…TVST), 992-1024 (SLTP…AGRS), 1195-1218 (KLQQ…ATPQ), 1276-1339 (QHLQ…SRSV), 1414-1434 (PPKT…RTLS), and 1646-1718 (AAPT…PPLP). 2 stretches are compositionally biased toward low complexity: residues 431–442 (SSAAARRSGLAR) and 450–469 (TPRA…VTRA). Residues 478 to 493 (DLGEEIDEMEIEDNDE) are compositionally biased toward acidic residues. Basic and acidic residues predominate over residues 494–513 (DASRGSRGKDSKAPSDRDGS). Acidic residues-rich tracts occupy residues 517-545 (MEGD…EEEE) and 599-616 (ESDD…DVDE). 2 stretches are compositionally biased toward low complexity: residues 626-639 (SSSS…SVGG) and 649-671 (LVQQ…TVST). Low complexity predominate over residues 1276–1285 (QHLQQQQQHH). Positions 1687 to 1696 (SSVNSNVSDV) are enriched in low complexity.

This sequence belongs to the N-CoR nuclear receptor corepressors family. As to quaternary structure, interacts with gex-3. Interacts (via C-terminus) with nhr-60. In terms of tissue distribution, in larvae, expressed in pharyngeal neurons, ventral and dorsal nerve cords, tail neurons, egg-laying neurons and egg-laying muscles. Detected in the neurons of the pharyngeal nerve ring, head neurons, tail neurons and egg-laying muscles in adults. Detected in male-specific tail ganglia and rays in males.

The protein localises to the nucleus. Mediates transcriptional repression by certain nuclear receptors. Plays a role in development and neuronal function. May play a role in muscle-specific oxidative mitochondrial metabolism. The protein is Nuclear receptor corepressor 1 of Caenorhabditis elegans.